A 332-amino-acid polypeptide reads, in one-letter code: Cytoskeleton protein RodZ (332 aa).

The Cytoplasmic portion of the chain corresponds to 1–111 (MNTETTQDTT…LKKSRKKRDG (111 aa)). The HTH cro/C1-type domain occupies 19-71 (LREARERLGLTQQTIAERLCLKITTVRDIEDGTTPADLAPTFLRGYIRSYAKL). Residues 30–49 (QQTIAERLCLKITTVRDIED) constitute a DNA-binding region (H-T-H motif). Residues 112-132 (WLMIITWLVVLVVLGLTGAWW) traverse the membrane as a helical; Signal-anchor for type II membrane protein segment. Topologically, residues 133–332 (WQNHQAQQAE…QVARLTLTAE (200 aa)) are periplasmic. The segment at 149-225 (HASSMQSQTE…PSQANATQSQ (77 aa)) is disordered. Composition is skewed to polar residues over residues 151–160 (SSMQSQTEGQ) and 168–182 (SAPQ…AATP). The segment covering 190–225 (SATIAATPSTPPSSTTASSAAPSSQSPSQANATQSQ) has biased composition (low complexity).

Belongs to the RodZ family.

It localises to the cell inner membrane. In terms of biological role, cytoskeletal protein that is involved in cell-shape control through regulation of the length of the long axis. In Pectobacterium atrosepticum (strain SCRI 1043 / ATCC BAA-672) (Erwinia carotovora subsp. atroseptica), this protein is Cytoskeleton protein RodZ.